The chain runs to 353 residues: Ribosomal RNA large subunit methyltransferase M (353 aa).

S-adenosyl-L-methionine-binding positions include Ser-179, 212-215, Asp-231, Asp-251, and Asp-267; that span reads APGG. Lys-296 (proton acceptor) is an active-site residue.

The protein belongs to the class I-like SAM-binding methyltransferase superfamily. RNA methyltransferase RlmE family. RlmM subfamily. As to quaternary structure, monomer.

The protein resides in the cytoplasm. It catalyses the reaction cytidine(2498) in 23S rRNA + S-adenosyl-L-methionine = 2'-O-methylcytidine(2498) in 23S rRNA + S-adenosyl-L-homocysteine + H(+). Functionally, catalyzes the 2'-O-methylation at nucleotide C2498 in 23S rRNA. This chain is Ribosomal RNA large subunit methyltransferase M, found in Laribacter hongkongensis (strain HLHK9).